Reading from the N-terminus, the 353-residue chain is MIDADRLITATGGRDRDEQMDRAIRPLSLADYIGQPTVREQMELFIQAARGRSEALDHTLIFGPPGLGKTTLANIIAQEMGVSIKSTSGPVLERPGDLAAILTNLEPNDVLFIDEIHRLSPIVEEVLYPAMEDFQLDIMIGEGPAARSIKLDLPPFTLVGATTRAGMLTNPLRDRFGIVQRLEFYNIADLSTIVSRSAGILGLVIEPQGAFEIARRARGTPRIANRLLRRVRDFAEVRGNGQITRQTADKALNLLDVDEHGFDHQDRRLLLTMIEKFDGGPVGVDSLAAAISEERHTIEDVLEPYLIQQGYIMRTPRGRVVTRHAYLHFGLNIPSRMGEIPVPDDFGDEPVDL.

A large ATPase domain (RuvB-L) region spans residues 4 to 185 (ADRLITATGG…FGIVQRLEFY (182 aa)). Residues Ile24, Arg25, Gly66, Lys69, Thr70, Thr71, 132 to 134 (EDF), Arg175, Tyr185, and Arg222 contribute to the ATP site. Mg(2+) is bound at residue Thr70. The segment at 186–256 (NIADLSTIVS…TADKALNLLD (71 aa)) is small ATPAse domain (RuvB-S). Residues 259–353 (EHGFDHQDRR…DDFGDEPVDL (95 aa)) are head domain (RuvB-H). 3 residues coordinate DNA: Arg295, Arg314, and Arg319.

It belongs to the RuvB family. Homohexamer. Forms an RuvA(8)-RuvB(12)-Holliday junction (HJ) complex. HJ DNA is sandwiched between 2 RuvA tetramers; dsDNA enters through RuvA and exits via RuvB. An RuvB hexamer assembles on each DNA strand where it exits the tetramer. Each RuvB hexamer is contacted by two RuvA subunits (via domain III) on 2 adjacent RuvB subunits; this complex drives branch migration. In the full resolvosome a probable DNA-RuvA(4)-RuvB(12)-RuvC(2) complex forms which resolves the HJ.

It is found in the cytoplasm. It carries out the reaction ATP + H2O = ADP + phosphate + H(+). Functionally, the RuvA-RuvB-RuvC complex processes Holliday junction (HJ) DNA during genetic recombination and DNA repair, while the RuvA-RuvB complex plays an important role in the rescue of blocked DNA replication forks via replication fork reversal (RFR). RuvA specifically binds to HJ cruciform DNA, conferring on it an open structure. The RuvB hexamer acts as an ATP-dependent pump, pulling dsDNA into and through the RuvAB complex. RuvB forms 2 homohexamers on either side of HJ DNA bound by 1 or 2 RuvA tetramers; 4 subunits per hexamer contact DNA at a time. Coordinated motions by a converter formed by DNA-disengaged RuvB subunits stimulates ATP hydrolysis and nucleotide exchange. Immobilization of the converter enables RuvB to convert the ATP-contained energy into a lever motion, pulling 2 nucleotides of DNA out of the RuvA tetramer per ATP hydrolyzed, thus driving DNA branch migration. The RuvB motors rotate together with the DNA substrate, which together with the progressing nucleotide cycle form the mechanistic basis for DNA recombination by continuous HJ branch migration. Branch migration allows RuvC to scan DNA until it finds its consensus sequence, where it cleaves and resolves cruciform DNA. The sequence is that of Holliday junction branch migration complex subunit RuvB from Pseudomonas syringae pv. syringae (strain B728a).